Here is a 229-residue protein sequence, read N- to C-terminus: MSPVKVFGHPMLTNVARVLLFLEEVGAEYELVPMDFVAGEHKRPQHVQLNPFAKMPGFQDGDLVLFESRAIAKYILRKYGGTAGLDLLGENSGIEELAMVDVWTEVEAQQYYPAISPVVFECIIIPFIIPGGGAAPNQTVVDESLERLRGVLGIYEARLEKSRYLAGDSITFADLNHIPFTFYFMTTPYAKVFDDYPKVKAWWEMLMARPAVQRVCKHMPTEFKLGAQY.

Positions 2–83 (SPVKVFGHPM…YILRKYGGTA (82 aa)) constitute a GST N-terminal domain. Glutathione-binding positions include 41-42 (HK), 54-55 (KM), and 67-68 (ES). The 131-residue stretch at 93 to 223 (GIEELAMVDV…RVCKHMPTEF (131 aa)) folds into the GST C-terminal domain.

It belongs to the GST superfamily. Phi family.

The enzyme catalyses RX + glutathione = an S-substituted glutathione + a halide anion + H(+). Functionally, conjugation of reduced glutathione to a wide number of exogenous and endogenous hydrophobic electrophiles. This Triticum aestivum (Wheat) protein is Glutathione S-transferase 1 (GSTA1).